The sequence spans 183 residues: ATP synthase subunit delta (183 aa).

The protein belongs to the ATPase delta chain family. F-type ATPases have 2 components, F(1) - the catalytic core - and F(0) - the membrane proton channel. F(1) has five subunits: alpha(3), beta(3), gamma(1), delta(1), epsilon(1). CF(0) has four main subunits: a(1), b(1), b'(1) and c(10-14). The alpha and beta chains form an alternating ring which encloses part of the gamma chain. F(1) is attached to F(0) by a central stalk formed by the gamma and epsilon chains, while a peripheral stalk is formed by the delta, b and b' chains.

Its subcellular location is the cellular thylakoid membrane. Functionally, f(1)F(0) ATP synthase produces ATP from ADP in the presence of a proton or sodium gradient. F-type ATPases consist of two structural domains, F(1) containing the extramembraneous catalytic core and F(0) containing the membrane proton channel, linked together by a central stalk and a peripheral stalk. During catalysis, ATP synthesis in the catalytic domain of F(1) is coupled via a rotary mechanism of the central stalk subunits to proton translocation. Its function is as follows. This protein is part of the stalk that links CF(0) to CF(1). It either transmits conformational changes from CF(0) to CF(1) or is implicated in proton conduction. The polypeptide is ATP synthase subunit delta (Nostoc sp. (strain PCC 7120 / SAG 25.82 / UTEX 2576)).